Reading from the N-terminus, the 279-residue chain is Tryptophan synthase alpha chain (279 aa).

Active-site proton acceptor residues include Glu50 and Asp61.

This sequence belongs to the TrpA family. Tetramer of two alpha and two beta chains.

The enzyme catalyses (1S,2R)-1-C-(indol-3-yl)glycerol 3-phosphate + L-serine = D-glyceraldehyde 3-phosphate + L-tryptophan + H2O. It functions in the pathway amino-acid biosynthesis; L-tryptophan biosynthesis; L-tryptophan from chorismate: step 5/5. Its function is as follows. The alpha subunit is responsible for the aldol cleavage of indoleglycerol phosphate to indole and glyceraldehyde 3-phosphate. The polypeptide is Tryptophan synthase alpha chain (Rhizobium johnstonii (strain DSM 114642 / LMG 32736 / 3841) (Rhizobium leguminosarum bv. viciae)).